A 187-amino-acid chain; its full sequence is Peptidyl-tRNA hydrolase (187 aa).

Y18 is a tRNA binding site. The active-site Proton acceptor is the H23. The tRNA site is built by F65, N67, and N113.

It belongs to the PTH family. In terms of assembly, monomer.

It is found in the cytoplasm. The enzyme catalyses an N-acyl-L-alpha-aminoacyl-tRNA + H2O = an N-acyl-L-amino acid + a tRNA + H(+). In terms of biological role, hydrolyzes ribosome-free peptidyl-tRNAs (with 1 or more amino acids incorporated), which drop off the ribosome during protein synthesis, or as a result of ribosome stalling. Functionally, catalyzes the release of premature peptidyl moieties from peptidyl-tRNA molecules trapped in stalled 50S ribosomal subunits, and thus maintains levels of free tRNAs and 50S ribosomes. In Coxiella burnetii (strain RSA 331 / Henzerling II), this protein is Peptidyl-tRNA hydrolase.